A 344-amino-acid chain; its full sequence is AA9 family lytic polysaccharide monooxygenase J (344 aa).

A signal peptide spans 1-20 (MKSSLLVVLTAGLAVRDAIA). Residues H21 and H99 each contribute to the Cu(2+) site. C58 and C194 form a disulfide bridge. O2 is bound by residues H180 and Q189. Y191 serves as a coordination point for Cu(2+). The tract at residues 272-301 (PGGKPASGGSDGNAPEVAEPSGGEGSPSAP) is disordered. The span at 285–301 (APEVAEPSGGEGSPSAP) shows a compositional bias: low complexity. The region spanning 304–341 (CEVAAYGQCGGDQYSGCTQCASGYTCKAVSPPYYSQCA) is the CBM1 domain.

Belongs to the polysaccharide monooxygenase AA9 family. Cu(2+) serves as cofactor.

The protein localises to the secreted. The enzyme catalyses [(1-&gt;4)-beta-D-glucosyl]n+m + reduced acceptor + O2 = 4-dehydro-beta-D-glucosyl-[(1-&gt;4)-beta-D-glucosyl]n-1 + [(1-&gt;4)-beta-D-glucosyl]m + acceptor + H2O.. In terms of biological role, lytic polysaccharide monooxygenase (LPMO) that depolymerizes crystalline and amorphous polysaccharides via the oxidation of scissile alpha- or beta-(1-4)-glycosidic bonds, yielding C4 oxidation products. Catalysis by LPMOs requires the reduction of the active-site copper from Cu(II) to Cu(I) by a reducing agent and H(2)O(2) or O(2) as a cosubstrate. In Neurospora crassa (strain ATCC 24698 / 74-OR23-1A / CBS 708.71 / DSM 1257 / FGSC 987), this protein is AA9 family lytic polysaccharide monooxygenase J (gh61-10).